Reading from the N-terminus, the 329-residue chain is NADH-quinone oxidoreductase subunit H (329 aa).

Helical transmembrane passes span I11–L31, L81–V101, I114–G134, I154–F174, T187–V207, F238–F258, Q270–L290, and F309–Q329.

It belongs to the complex I subunit 1 family. In terms of assembly, NDH-1 is composed of 13 different subunits. Subunits NuoA, H, J, K, L, M, N constitute the membrane sector of the complex.

It localises to the cell inner membrane. The catalysed reaction is a quinone + NADH + 5 H(+)(in) = a quinol + NAD(+) + 4 H(+)(out). Its function is as follows. NDH-1 shuttles electrons from NADH, via FMN and iron-sulfur (Fe-S) centers, to quinones in the respiratory chain. The immediate electron acceptor for the enzyme in this species is believed to be ubiquinone. Couples the redox reaction to proton translocation (for every two electrons transferred, four hydrogen ions are translocated across the cytoplasmic membrane), and thus conserves the redox energy in a proton gradient. This subunit may bind ubiquinone. The protein is NADH-quinone oxidoreductase subunit H of Azotobacter vinelandii (strain DJ / ATCC BAA-1303).